The sequence spans 452 residues: CUGBP Elav-like family member 3 (452 aa).

RRM domains follow at residues I7–S88, R94–T174, and C367–P445.

This sequence belongs to the CELF/BRUNOL family.

Its subcellular location is the nucleus. The protein resides in the cytoplasm. RNA-binding protein that may be involved in the regulation of pre-mRNA alternative splicing. In Danio rerio (Zebrafish), this protein is CUGBP Elav-like family member 3 (celf3).